The following is a 205-amino-acid chain: Imidazole glycerol phosphate synthase subunit HisH (205 aa).

Positions 3–205 constitute a Glutamine amidotransferase type-1 domain; that stretch reads RIALLDYGMG…LLKNFVEWNI (203 aa). Cys-80 functions as the Nucleophile in the catalytic mechanism. Residues His-185 and Glu-187 contribute to the active site.

Heterodimer of HisH and HisF.

Its subcellular location is the cytoplasm. It carries out the reaction 5-[(5-phospho-1-deoxy-D-ribulos-1-ylimino)methylamino]-1-(5-phospho-beta-D-ribosyl)imidazole-4-carboxamide + L-glutamine = D-erythro-1-(imidazol-4-yl)glycerol 3-phosphate + 5-amino-1-(5-phospho-beta-D-ribosyl)imidazole-4-carboxamide + L-glutamate + H(+). It catalyses the reaction L-glutamine + H2O = L-glutamate + NH4(+). It participates in amino-acid biosynthesis; L-histidine biosynthesis; L-histidine from 5-phospho-alpha-D-ribose 1-diphosphate: step 5/9. IGPS catalyzes the conversion of PRFAR and glutamine to IGP, AICAR and glutamate. The HisH subunit catalyzes the hydrolysis of glutamine to glutamate and ammonia as part of the synthesis of IGP and AICAR. The resulting ammonia molecule is channeled to the active site of HisF. This chain is Imidazole glycerol phosphate synthase subunit HisH, found in Acinetobacter baylyi (strain ATCC 33305 / BD413 / ADP1).